The following is a 337-amino-acid chain: GTPase Obg (337 aa).

The 158-residue stretch at 1–158 folds into the Obg domain; the sequence is MFVDRVIIEL…HHIELELKLI (158 aa). The OBG-type G domain maps to 159–330; it reads ADVGLVGFPN…LIEKMTQRLS (172 aa). Residues 165–172, 190–194, 212–215, 282–285, and 311–313 each bind GTP; these read GFPNAGKS, FTTLQ, DIPG, NKID, and SAV. Residues S172 and T192 each contribute to the Mg(2+) site.

Belongs to the TRAFAC class OBG-HflX-like GTPase superfamily. OBG GTPase family. In terms of assembly, monomer. It depends on Mg(2+) as a cofactor.

It is found in the cytoplasm. In terms of biological role, an essential GTPase which binds GTP, GDP and possibly (p)ppGpp with moderate affinity, with high nucleotide exchange rates and a fairly low GTP hydrolysis rate. Plays a role in control of the cell cycle, stress response, ribosome biogenesis and in those bacteria that undergo differentiation, in morphogenesis control. In Protochlamydia amoebophila (strain UWE25), this protein is GTPase Obg.